We begin with the raw amino-acid sequence, 235 residues long: 1-(5-phosphoribosyl)-5-[(5-phosphoribosylamino)methylideneamino] imidazole-4-carboxamide isomerase (235 aa).

Residue aspartate 8 is the Proton acceptor of the active site. Aspartate 127 functions as the Proton donor in the catalytic mechanism.

This sequence belongs to the HisA/HisF family.

It localises to the cytoplasm. It carries out the reaction 1-(5-phospho-beta-D-ribosyl)-5-[(5-phospho-beta-D-ribosylamino)methylideneamino]imidazole-4-carboxamide = 5-[(5-phospho-1-deoxy-D-ribulos-1-ylimino)methylamino]-1-(5-phospho-beta-D-ribosyl)imidazole-4-carboxamide. The protein operates within amino-acid biosynthesis; L-histidine biosynthesis; L-histidine from 5-phospho-alpha-D-ribose 1-diphosphate: step 4/9. This Aliarcobacter butzleri (strain RM4018) (Arcobacter butzleri) protein is 1-(5-phosphoribosyl)-5-[(5-phosphoribosylamino)methylideneamino] imidazole-4-carboxamide isomerase.